Consider the following 685-residue polypeptide: MNKGWLELESDPGLFTLLVEDFGVKGVQVEEIYDLQSKCPGPVYGFIFLFKWIEERRSRRKVSTLLDDTSVMEDEVVNNMFFAHQLIPNSCATHALLSVLLNCGGVHLGPTLSRIKEFTKGFSPESKGYAIGNAPELAKAHNSHARPEPRHLPEKQNGISAVRTMEAFHFVSYVPIKGRLFELDGLKVYPIDHGPWAEDEEWTDKARRVIMERIGLATAGEPYHDIRFNLMAVVPDRRLKYEGKLNILKMNRQTVLEALQQLIRVTQPELIQAQKSTDGQSTEETKSPAIKAPVSQESHRAHHGSHRSTTDLGAEPAGSLLRGPVLSAHNKSKPLPQNGGIVPAPASRLPAFLDNHNYAKSPMQEEEDLAAGVGRSRGVPPPAPDTDEEEEEETENVRRPLTPPGFKRRSSESLPPPPGPEPGVLAEKLKETQRDLCSPLSIKTGAPTAPHSQPSPTPSNESTDTASEIGSAFNSPLRSPLRSANPTRPSSPVTSHLSKVLFGEEEPLSRLDCVRYNRAVRELGPHISTGILHLSKDGYLSPLSRLDTGKVSPKSHKAEEPRESPEPDSERNRVTEAPQGEKFSPKELLALLKCVEAEISASEACLREELEKRKKFKIDDQRRTHNYDEFICAFISMLAQEGMLASLVEQNISVRRRQGVSIGRLHKQRKPDRRKRSRPYKAKRQ.

The UCH catalytic domain maps to 4–235 (GWLELESDPG…IRFNLMAVVP (232 aa)). The active-site Nucleophile is cysteine 91. Histidine 169 (proton donor) is an active-site residue. Disordered stretches follow at residues 272–347 (QAQK…APAS), 363–425 (MQEE…PGVL), 440–496 (LSIK…VTSH), and 543–580 (LSRLDTGKVSPKSHKAEEPRESPEPDSERNRVTEAPQG). Over residues 273–282 (AQKSTDGQST) the composition is skewed to polar residues. Acidic residues predominate over residues 385–394 (DTDEEEEEET). Positions 450-496 (PHSQPSPTPSNESTDTASEIGSAFNSPLRSPLRSANPTRPSSPVTSH) are enriched in polar residues. Over residues 556–574 (HKAEEPRESPEPDSERNRV) the composition is skewed to basic and acidic residues. In terms of domain architecture, ULD spans 626–654 (NYDEFICAFISMLAQEGMLASLVEQNISV). The disordered stretch occupies residues 659-685 (GVSIGRLHKQRKPDRRKRSRPYKAKRQ).

Belongs to the peptidase C12 family. BAP1 subfamily. As to quaternary structure, component of the PR-DUB complex.

It is found in the cytoplasm. It localises to the nucleus. It catalyses the reaction Thiol-dependent hydrolysis of ester, thioester, amide, peptide and isopeptide bonds formed by the C-terminal Gly of ubiquitin (a 76-residue protein attached to proteins as an intracellular targeting signal).. Functionally, deubiquitinating enzyme that plays a key role in chromatin by mediating deubiquitination of histone H2A. Catalytic component of the PR-DUB complex, a complex that specifically mediates deubiquitination of histone H2A monoubiquitinated at 'Lys-119' (H2AK119ub1). This is Ubiquitin carboxyl-terminal hydrolase BAP1 (bap1) from Xenopus laevis (African clawed frog).